Here is a 98-residue protein sequence, read N- to C-terminus: NADH-ubiquinone oxidoreductase chain 4L (98 aa).

The next 3 membrane-spanning stretches (helical) occupy residues Met-1–Met-21, Ser-29–Leu-49, and Leu-61–Ile-81.

Belongs to the complex I subunit 4L family. Core subunit of respiratory chain NADH dehydrogenase (Complex I) which is composed of 45 different subunits.

Its subcellular location is the mitochondrion inner membrane. The catalysed reaction is a ubiquinone + NADH + 5 H(+)(in) = a ubiquinol + NAD(+) + 4 H(+)(out). Core subunit of the mitochondrial membrane respiratory chain NADH dehydrogenase (Complex I) which catalyzes electron transfer from NADH through the respiratory chain, using ubiquinone as an electron acceptor. Part of the enzyme membrane arm which is embedded in the lipid bilayer and involved in proton translocation. The sequence is that of NADH-ubiquinone oxidoreductase chain 4L (MT-ND4L) from Loxodonta africana (African elephant).